A 529-amino-acid chain; its full sequence is Pheophorbide a oxygenase, chloroplastic (529 aa).

Disordered regions lie at residues 1–24 (MPVM…RRVP) and 46–72 (LRVA…TSSA). The N-terminal 47 residues, 1–47 (MPVMAPTASLLLSPRPLPASRRVPSLPALSASGRLRLRRARADTRLR), are a transit peptide targeting the chloroplast. One can recognise a Rieske domain in the interval 82–194 (WYPVSLVEDL…TLVSQGLLFV (113 aa)). [2Fe-2S] cluster is bound by residues cysteine 124, histidine 126, cysteine 144, and histidine 147.

[2Fe-2S] cluster serves as cofactor. Expressed in leaves. Expressed at low levels in roots, stems, panicles and seeds.

The protein localises to the plastid. It is found in the chloroplast. It catalyses the reaction pheophorbide a + 2 reduced [2Fe-2S]-[ferredoxin] + O2 + 2 H(+) = red chlorophyll catabolite + 2 oxidized [2Fe-2S]-[ferredoxin]. Its pathway is porphyrin-containing compound metabolism; chlorophyll degradation. In terms of biological role, catalyzes the key reaction of chlorophyll catabolism, porphyrin macrocycle cleavage of pheophorbide a (pheide a) to a primary fluorescent catabolite (pFCC). Works in a two-step reaction with red chlorophyll catabolite reductase (RCCR). Creates the intermediate RCC through the opening of the porphyrin macrocycle by the introduction of one atom of molecular oxygen at the alpha-methine bridge. Seems to be specific for pheide a. Belongs to the chlorophyll catabolic enzymes (CCEs). May play a role in senescence and response to wounding. The polypeptide is Pheophorbide a oxygenase, chloroplastic (Oryza sativa subsp. japonica (Rice)).